A 258-amino-acid chain; its full sequence is Cobalt-precorrin-4 C(11)-methyltransferase (258 aa).

The protein belongs to the precorrin methyltransferase family. As to quaternary structure, homodimer.

It catalyses the reaction Co-precorrin-4 + S-adenosyl-L-methionine = Co-precorrin-5A + S-adenosyl-L-homocysteine + H(+). It participates in cofactor biosynthesis; adenosylcobalamin biosynthesis; cob(II)yrinate a,c-diamide from sirohydrochlorin (anaerobic route): step 4/10. Its function is as follows. Catalyzes the methylation of C-11 in cobalt-precorrin-4 to form cobalt-precorrin-5A. The sequence is that of Cobalt-precorrin-4 C(11)-methyltransferase (cbiF) from Priestia megaterium (Bacillus megaterium).